A 332-amino-acid polypeptide reads, in one-letter code: Melanocortin receptor 4 (332 aa).

Residues M1–Q43 are Extracellular-facing. 3 N-linked (GlcNAc...) asparagine glycosylation sites follow: N2, N17, and N26. Cystine bridges form between C40-C279 and C271-C277. Residues L44–I69 form a helical membrane-spanning segment. Over A70–F81 the chain is Cytoplasmic. The chain crosses the membrane as a helical span at residues F82–L106. E100, D122, and D126 together coordinate Ca(2+). The Extracellular portion of the chain corresponds to L107–N123. Residues V124 to V145 form a helical membrane-spanning segment. At D146–R165 the chain is on the cytoplasmic side. The chain crosses the membrane as a helical span at residues V166–I186. Residues Y187–S191 are Extracellular-facing. A helical membrane pass occupies residues A192 to M215. Residues F216–T248 are Cytoplasmic-facing. A helical transmembrane segment spans residues I249–C271. Over P272–F280 the chain is Extracellular. A helical membrane pass occupies residues M281–L304. Over R305–Y332 the chain is Cytoplasmic. A lipid anchor (S-palmitoyl cysteine) is attached at C318.

The protein belongs to the G-protein coupled receptor 1 family. As to quaternary structure, homodimer; disulfide-linked, also forms higher order oligomers. Interacts with GNAS. Interacts with ATRNL1. Interacts with MGRN1; this interaction competes with GNAS-binding and thus inhibits agonist-induced cAMP production. Interacts with MRAP and MRAP2; these associated factors increase ligand-sensitivity and generation of cAMP.

It is found in the cell membrane. Its function is as follows. Hormone receptor that acts as a key component of the leptin-melanocortin pathway at the intersection of homeostatic maintenance of energetic state. Plays a role in regulating food intake: activation by a stimulating hormone such as anorexigenic alpha-melanocyte stimulating hormone (alpha-MSH) inhibits appetite, whereas binding to a natural antagonist like Agouti-related protein/AGRP promotes appetite. G-protein-coupled receptor that activates conventional Galphas signaling leading to induction of anorexogenic signaling in the hypothalamus to result in negative energy balance. Regulates the firing activity of neurons from the hypothalamus by alpha-MSH and AGRP independently of Galphas signaling by ligand-induced coupling of closure of inwardly rectifying potassium channel KCNJ13. In intestinal epithelial cells, plays a role in the inhibition of hepatic glucose production via nesfatin-1/NUCB2 leading to increased cyclic adenosine monophosphate (cAMP) levels and glucagon-like peptide 1 (GLP-1) secretion in the intestinal epithelium. In Sus scrofa (Pig), this protein is Melanocortin receptor 4 (MC4R).